We begin with the raw amino-acid sequence, 489 residues long: 3-octaprenyl-4-hydroxybenzoate carboxy-lyase (489 aa).

Asn-172 lines the Mn(2+) pocket. Prenylated FMN contacts are provided by residues 175–177 (IYR), 189–191 (RWL), and 194–195 (RG). Mn(2+) is bound at residue Glu-238. Asp-287 serves as the catalytic Proton donor.

Belongs to the UbiD family. Homohexamer. Requires prenylated FMN as cofactor. It depends on Mn(2+) as a cofactor.

Its subcellular location is the cell membrane. It carries out the reaction a 4-hydroxy-3-(all-trans-polyprenyl)benzoate + H(+) = a 2-(all-trans-polyprenyl)phenol + CO2. The protein operates within cofactor biosynthesis; ubiquinone biosynthesis. In terms of biological role, catalyzes the decarboxylation of 3-octaprenyl-4-hydroxy benzoate to 2-octaprenylphenol, an intermediate step in ubiquinone biosynthesis. The sequence is that of 3-octaprenyl-4-hydroxybenzoate carboxy-lyase from Aeromonas hydrophila subsp. hydrophila (strain ATCC 7966 / DSM 30187 / BCRC 13018 / CCUG 14551 / JCM 1027 / KCTC 2358 / NCIMB 9240 / NCTC 8049).